The sequence spans 263 residues: Type-2Ba cytolytic delta-endotoxin (263 aa).

Belongs to the cyt1/cyt2 endotoxin family. In terms of processing, active after proteolytic processing.

Its function is as follows. Kills the larvae of dipteran insects by making pores in the epithelial cell membrane of the insect midgut. This is Type-2Ba cytolytic delta-endotoxin (cyt2Ba1) from Bacillus thuringiensis subsp. israelensis.